Consider the following 713-residue polypeptide: B3 domain-containing transcription factor VAL3 (713 aa).

A DNA-binding region (TF-B3) is located at residues 328-427 (FEKILSATDT…KLILGFRKAS (100 aa)). 2 disordered regions span residues 459 to 478 (VECSSGKKKSSMMITRSKRQ) and 616 to 713 (LNSD…TSSM). Positions 464–477 (GKKKSSMMITRSKR) are enriched in basic residues. Over residues 616-629 (LNSDNGLHQSANNS) the composition is skewed to polar residues. The span at 663-674 (TKSETLPHDDTV) shows a compositional bias: basic and acidic residues. Low complexity predominate over residues 676 to 688 (SSFTSPSSSSAHS). Basic and acidic residues predominate over residues 690–700 (NNKEDEGKLKT). Over residues 701-713 (TTEIADTTTTSSM) the composition is skewed to low complexity.

Its subcellular location is the nucleus. Functionally, may be involved in plant development. The sequence is that of B3 domain-containing transcription factor VAL3 (VAL3) from Arabidopsis thaliana (Mouse-ear cress).